Here is a 1403-residue protein sequence, read N- to C-terminus: Sushi, nidogen and EGF-like domain-containing protein 1 (1403 aa).

The signal sequence occupies residues 1–24 (MRRGAAWALLLAAALGLGARGVRA). An NIDO domain is found at 103 to 258 (AFWADVDNRR…GRWAFRIDDA (156 aa)). EGF-like domains follow at residues 268–309 (TTSV…RRCH), 311–347 (DVNECASHPCQNGGTCTHGVNSFSCQCPAGFQGPTCE), and 349–385 (AQSPCDNKVCQNGGQCQAESSSAVCVCQAGYTGATCE). 18 disulfide bridges follow: Cys272/Cys284, Cys278/Cys297, Cys299/Cys308, Cys315/Cys326, Cys320/Cys335, Cys337/Cys346, Cys353/Cys364, Cys358/Cys373, Cys375/Cys384, Cys391/Cys402, Cys396/Cys411, Cys413/Cys422, Cys433/Cys444, Cys438/Cys453, Cys455/Cys464, Cys472/Cys480, Cys474/Cys488, and Cys490/Cys499. Asn292 carries N-linked (GlcNAc...) asparagine glycosylation. One can recognise an EGF-like 4; calcium-binding domain in the interval 387-423 (DVDECSSDPCLNGGSCVDLVGNYSCICVEPFEGPQCE). Asn408 carries an N-linked (GlcNAc...) asparagine glycan. EGF-like domains are found at residues 429–465 (VPSPCLSNPCLNGGTCVDADQGYVCECPEGFMGLDCR) and 468–500 (ILNDCDCRNGGRCLGANTTICQCPPGFFGLLCE). Asn484 carries N-linked (GlcNAc...) asparagine glycosylation. Asn536 carries N-linked (GlcNAc...) asparagine glycosylation. EGF-like domains lie at 541 to 577 (LPSPCDSDPCFNGGSCDAHEDSYTCECPRGFHGRHCE), 580 to 616 (RPHLCSSGPCRNGGTCKETGDEYRCTCPYRFTGRHCE), 619 to 655 (KPDSCASGPCHNGGTCFHYIGKYKCDCPPGFSGRHCE), and 657 to 693 (APSPCFRSPCMNGGICEDLGTDFSCHCQPGYTGHRCQ). 26 disulfides stabilise this stretch: Cys545–Cys556, Cys550–Cys565, Cys567–Cys576, Cys584–Cys595, Cys589–Cys604, Cys606–Cys615, Cys623–Cys634, Cys628–Cys643, Cys645–Cys654, Cys661–Cys672, Cys666–Cys681, Cys683–Cys692, Cys698–Cys739, Cys724–Cys751, Cys757–Cys768, Cys762–Cys777, Cys779–Cys788, Cys795–Cys806, Cys800–Cys815, Cys817–Cys826, Cys833–Cys844, Cys838–Cys853, Cys855–Cys864, Cys871–Cys882, Cys876–Cys891, and Cys893–Cys902. The Sushi domain occupies 696–753 (VDCGQPEEVKHATMRLNGTRMGSVALYTCDPGFSLSVLSHMRVCQPQGVWSQPPQCIE). Asn712 carries an N-linked (GlcNAc...) asparagine glycan. The region spanning 753–789 (EVDECQSQPCLHKGSCQDLIAGYQCLCSPGYEGVHCE) is the EGF-like 11; calcium-binding domain. One can recognise an EGF-like 12; calcium-binding domain in the interval 791–827 (ETDECQAQPCRNGGSCRDLPGAFICQCPEGFVGTHCE). EGF-like domains are found at residues 829–865 (EVDACASSPCQHGGRCEDGGGAYLCVCPEGFFGYNCE) and 867–903 (VSDPCFSSPCGGRGYCLASNGSHSCTCKVGYTGKDCT). Asn886 is a glycosylation site (N-linked (GlcNAc...) asparagine). 3 Fibronectin type-III domains span residues 908-1006 (PPTA…TRPR), 1007-1105 (PIED…TRPL), and 1106-1200 (PPAN…SPRD). Asn977, Asn1015, Asn1109, Asn1139, and Asn1298 each carry an N-linked (GlcNAc...) asparagine glycan. The interval 1295 to 1314 (LPKNNSKDTESTPGSCSEDT) is disordered. Over residues 1305-1314 (STPGSCSEDT) the composition is skewed to polar residues. An EGF-like 15 domain is found at 1306 to 1342 (TPGSCSEDTCQNGGTCVPGANAHSCDCRPGFKGRHCE). 3 cysteine pairs are disulfide-bonded: Cys1310-Cys1321, Cys1315-Cys1330, and Cys1332-Cys1341.

In terms of processing, phosphorylated on serine and threonine residues. Post-translationally, N-glycosylated. Expressed in liver.

It localises to the secreted. Its subcellular location is the extracellular space. The protein resides in the extracellular matrix. The chain is Sushi, nidogen and EGF-like domain-containing protein 1 from Rattus norvegicus (Rat).